Consider the following 109-residue polypeptide: Staphostatin B (109 aa).

A binds to staphopain B region spans residues 97 to 101; sequence IGTSR.

Belongs to the protease inhibitor I57 (SspC) family. As to quaternary structure, forms a stable non-covalent complex with prematurely activated/folded SspB.

It localises to the cytoplasm. Specifically inhibits the cysteine protease staphopain B (SspB) by blocking the active site of the enzyme. Probably required to protect cytoplasmic proteins from being degraded by prematurely activated/folded prostaphopain B. Also involved in growth capacity, viability and bacterial morphology. The polypeptide is Staphostatin B (sspC) (Staphylococcus aureus (strain MRSA252)).